Consider the following 242-residue polypeptide: EF-hand domain-containing protein D2 (242 aa).

Residues 1-53 (MATDELASKLSRRLQMEGEGGGEAPEQPGLNGAAAAAAAAGAPDETAEALGSA) form a disordered region. At Ala2 the chain carries N-acetylalanine. Ser11 carries the post-translational modification Phosphoserine. Over residues 32–42 (GAAAAAAAAGA) the composition is skewed to low complexity. Phosphoserine occurs at positions 76 and 78. Tyr85 carries the phosphotyrosine modification. 2 consecutive EF-hand domains span residues 94–129 (KQIK…LGAP) and 130–165 (QTHL…AAAG). 8 residues coordinate Ca(2+): Asp107, Asp111, Glu118, Asp143, Asp145, Asp147, Lys149, and Glu154. Lys235 is modified (N6-acetyllysine).

In terms of assembly, interacts with CASP9; with inactive form.

The protein localises to the membrane raft. Its function is as follows. May regulate B-cell receptor (BCR)-induced immature and primary B-cell apoptosis. Plays a role as negative regulator of the canonical NF-kappa-B-activating branch. Controls spontaneous apoptosis through the regulation of BCL2L1 abundance. The polypeptide is EF-hand domain-containing protein D2 (EFHD2) (Bos taurus (Bovine)).